The primary structure comprises 655 residues: Spastin (655 aa).

The Cytoplasmic portion of the chain corresponds to 1 to 58 (MLFDLINSFLKNGINNSNNNNNNNNNKNNFYNSLEDDDYLLNNQTTKVSLYLYFFIFA). Positions 59-79 (FMFLVVDLIMLYYKHRENIES) form an intramembrane region, helical. Residues 80–655 (RETDLSLKLN…EKWNQKFGTI (576 aa)) are Cytoplasmic-facing. Positions 102–140 (KSSPTTSTTTTTITPTTTSSSQLRQPSTPKTTTKTINSP) are enriched in low complexity. Positions 102–151 (KSSPTTSTTTTTITPTTTSSSQLRQPSTPKTTTKTINSPPSTPKSPPPLP) are disordered. A compositionally biased stretch (pro residues) spans 141-151 (PSTPKSPPPLP). The region spanning 169 to 232 (LNEAKSQIDS…KRAEYLKNEL (64 aa)) is the MIT domain. Residues 261-325 (EQQQQQQQQS…TITSPGNKYG (65 aa)) are disordered. Residues 262–320 (QQQQQQQQSSSTYRNSLNLSSSKSNSTINNRHSISSLSSLNSTTATTTTPSNTSTITSP) show a composition bias toward low complexity. 424–431 (GPPGNGKT) is a binding site for ATP.

This sequence belongs to the AAA ATPase family. Spastin subfamily. In terms of assembly, homohexamer. The homohexamer is stabilized by ATP-binding. The homohexamer may adopt a ring conformation through which microtubules pass prior to being severed. Interacts with microtubules.

The protein resides in the membrane. The protein localises to the cytoplasm. It localises to the cytoskeleton. It is found in the microtubule organizing center. Its subcellular location is the centrosome. It carries out the reaction n ATP + n H2O + a microtubule = n ADP + n phosphate + (n+1) alpha/beta tubulin heterodimers.. Functionally, ATP-dependent microtubule severing protein. Microtubule severing may promote reorganization of cellular microtubule arrays and the release of microtubules from the microtubule organizing center following nucleation. This Dictyostelium discoideum (Social amoeba) protein is Spastin.